Consider the following 795-residue polypeptide: Cyclin-dependent kinase 11B (795 aa).

The segment covering L17–I60 has biased composition (basic and acidic residues). The interval L17–A412 is disordered. 2 positions are modified to phosphoserine: S47 and S72. The span at E95–S113 shows a compositional bias: basic residues. Basic and acidic residues-rich tracts occupy residues H114 to H131, R138 to K227, P238 to E253, and Q264 to L276. Phosphoserine is present on S115. At S283 the chain carries Phosphoserine. Residues S291–G302 are compositionally biased toward low complexity. 2 stretches are compositionally biased toward acidic residues: residues S303 to E364 and E383 to G392. Positions F438–F723 constitute a Protein kinase domain. Residues I444–V452 and K467 each bind ATP. S482 bears the Phosphoserine; by CDK7 mark. T488 is subject to Phosphothreonine; by CDK7. D562 (proton acceptor) is an active-site residue. Phosphoserine is present on S589. A Phosphotyrosine modification is found at Y594. T595 is modified (phosphothreonine). K641 participates in a covalent cross-link: Glycyl lysine isopeptide (Lys-Gly) (interchain with G-Cter in SUMO2). Residues S733–F795 are disordered. Phosphothreonine is present on T751. S752 carries the phosphoserine modification.

Belongs to the protein kinase superfamily. CMGC Ser/Thr protein kinase family. CDC2/CDKX subfamily. In terms of assembly, cleaved isoform SV9 (p110C) binds to the serine/threonine kinase PAK1 and RANBP9. p110C interacts with RNPS1. Isoform 7, but not isoform SV9, nor its cleavage product p110C, interacts with CCND3. Interacts with CCNL1 and CCNL2. Forms complexes with pre-mRNA-splicing factors, including at least SRSF1, SRSF2 and SRSF7/SLU7. Interacts with isoform 5 of MYO18A. (Microbial infection) Interacts with human herpes virus 1 (HHV-1) transcriptional regulator ICP22. Requires Mg(2+) as cofactor. In terms of processing, during FAS- or TNF-induced apoptosis, isoform SV9 is cleaved by caspases to produce p110C, a fragment that contains the C-terminal kinase domain. Phosphorylation at Ser-115 creates a binding site for 14-3-3 proteins. p110C can be autophosphorylated. In terms of tissue distribution, expressed ubiquitously. Some evidence of isoform-specific tissue distribution.

The protein resides in the cytoplasm. It is found in the nucleus. The enzyme catalyses L-seryl-[protein] + ATP = O-phospho-L-seryl-[protein] + ADP + H(+). It carries out the reaction L-threonyl-[protein] + ATP = O-phospho-L-threonyl-[protein] + ADP + H(+). Its activity is regulated as follows. Phosphorylation at Thr-448 or Tyr-449 inactivates the enzyme, while phosphorylation at Thr-595 activates it. Plays multiple roles in cell cycle progression, cytokinesis and apoptosis. Involved in pre-mRNA splicing in a kinase activity-dependent manner. Isoform 7 may act as a negative regulator of normal cell cycle progression. In Homo sapiens (Human), this protein is Cyclin-dependent kinase 11B (CDK11B).